The sequence spans 259 residues: UPF0246 protein PLES_14941 (259 aa).

This sequence belongs to the UPF0246 family.

The chain is UPF0246 protein PLES_14941 from Pseudomonas aeruginosa (strain LESB58).